Reading from the N-terminus, the 184-residue chain is Ribulose bisphosphate carboxylase small subunit, chloroplastic 2 (184 aa).

The transit peptide at 1–59 (MASSMMSNAATAVAVAATSGGAQANMVAPFNGLKSIASFPVTRKSNDITSIASNGGRVQ) directs the protein to the chloroplast.

This sequence belongs to the RuBisCO small chain family. In terms of assembly, heterohexadecamer of 8 large and 8 small subunits.

The protein localises to the plastid. Its subcellular location is the chloroplast. Its function is as follows. RuBisCO catalyzes two reactions: the carboxylation of D-ribulose 1,5-bisphosphate, the primary event in carbon dioxide fixation, as well as the oxidative fragmentation of the pentose substrate. Both reactions occur simultaneously and in competition at the same active site. Although the small subunit is not catalytic it is essential for maximal activity. This Amaranthus hypochondriacus (Prince-of-Wales feather) protein is Ribulose bisphosphate carboxylase small subunit, chloroplastic 2.